Reading from the N-terminus, the 162-residue chain is Corticoliberin-1 (162 aa).

The first 24 residues, 1–24 (MKLNFLVTTVALLVAFPPPYECRA), serve as a signal peptide directing secretion. The propeptide occupies 25 to 119 (IDSSSNQPAT…ALDSEERERR (95 aa)). Phe-160 is subject to Phenylalanine amide.

It belongs to the sauvagine/corticotropin-releasing factor/urotensin I family.

Its subcellular location is the secreted. Functionally, this hormone from hypothalamus regulates the release of corticotropin from pituitary gland. In Catostomus commersonii (White sucker), this protein is Corticoliberin-1 (crf1).